The primary structure comprises 647 residues: NADP-dependent malic enzyme, chloroplastic (647 aa).

The N-terminal 61 residues, 1-61 (MMSLNSSSVV…VDGAVKDVNA (61 aa)), are a transit peptide targeting the chloroplast. Tyrosine 195 serves as the catalytic Proton donor. Arginine 248 is an NAD(+) binding site. The active-site Proton acceptor is the lysine 266. Positions 338, 339, and 362 each coordinate a divalent metal cation. Residue aspartate 362 coordinates NAD(+). 391–407 (LFLGAGEAGTGIAELIA) provides a ligand contact to NADP(+). Residue asparagine 503 coordinates NAD(+).

It belongs to the malic enzymes family. In terms of assembly, homotetramer. Requires Mg(2+) as cofactor. Mn(2+) is required as a cofactor.

It is found in the plastid. It localises to the chloroplast. It catalyses the reaction (S)-malate + NADP(+) = pyruvate + CO2 + NADPH. The enzyme catalyses oxaloacetate + H(+) = pyruvate + CO2. The protein operates within photosynthesis; C3 acid pathway. Functionally, the chloroplastic ME isoform decarboxylates malate shuttled from neighboring mesophyll cells. The CO(2) released is then refixed by ribulose-bisphosphate carboxylase. This pathway eliminates the photorespiratory loss of CO(2) that occurs in most plants. This is NADP-dependent malic enzyme, chloroplastic (MODA) from Flaveria pringlei.